A 391-amino-acid polypeptide reads, in one-letter code: Ferrochelatase (391 aa).

Residues histidine 196 and glutamate 281 each coordinate Fe cation.

It belongs to the ferrochelatase family.

The protein localises to the cytoplasm. The enzyme catalyses heme b + 2 H(+) = protoporphyrin IX + Fe(2+). The protein operates within porphyrin-containing compound metabolism; protoheme biosynthesis; protoheme from protoporphyrin-IX: step 1/1. Catalyzes the ferrous insertion into protoporphyrin IX. This is Ferrochelatase from Prochlorococcus marinus (strain MIT 9515).